The primary structure comprises 305 residues: Ferredoxin--NADP reductase (305 aa).

The FAD site is built by E31, Y42, V82, and D274.

This sequence belongs to the ferredoxin--NADP reductase type 2 family. As to quaternary structure, homodimer. Requires FAD as cofactor.

It catalyses the reaction 2 reduced [2Fe-2S]-[ferredoxin] + NADP(+) + H(+) = 2 oxidized [2Fe-2S]-[ferredoxin] + NADPH. The protein is Ferredoxin--NADP reductase of Ignicoccus hospitalis (strain KIN4/I / DSM 18386 / JCM 14125).